Here is a 414-residue protein sequence, read N- to C-terminus: DNA primase small subunit PriS (414 aa).

Catalysis depends on residues D98, D100, and D312.

Belongs to the eukaryotic-type primase small subunit family. As to quaternary structure, heterodimer of a small subunit (PriS) and a large subunit (PriL). It depends on Mg(2+) as a cofactor. Mn(2+) serves as cofactor.

Functionally, catalytic subunit of DNA primase, an RNA polymerase that catalyzes the synthesis of short RNA molecules used as primers for DNA polymerase during DNA replication. The small subunit contains the primase catalytic core and has DNA synthesis activity on its own. Binding to the large subunit stabilizes and modulates the activity, increasing the rate of DNA synthesis while decreasing the length of the DNA fragments, and conferring RNA synthesis capability. The DNA polymerase activity may enable DNA primase to also catalyze primer extension after primer synthesis. May also play a role in DNA repair. This Methanosarcina mazei (strain ATCC BAA-159 / DSM 3647 / Goe1 / Go1 / JCM 11833 / OCM 88) (Methanosarcina frisia) protein is DNA primase small subunit PriS.